A 466-amino-acid polypeptide reads, in one-letter code: 3-isopropylmalate dehydratase large subunit (466 aa).

[4Fe-4S] cluster contacts are provided by cysteine 346, cysteine 406, and cysteine 409.

This sequence belongs to the aconitase/IPM isomerase family. LeuC type 1 subfamily. In terms of assembly, heterodimer of LeuC and LeuD. Requires [4Fe-4S] cluster as cofactor.

It carries out the reaction (2R,3S)-3-isopropylmalate = (2S)-2-isopropylmalate. The protein operates within amino-acid biosynthesis; L-leucine biosynthesis; L-leucine from 3-methyl-2-oxobutanoate: step 2/4. Its function is as follows. Catalyzes the isomerization between 2-isopropylmalate and 3-isopropylmalate, via the formation of 2-isopropylmaleate. In Alteromonas mediterranea (strain DSM 17117 / CIP 110805 / LMG 28347 / Deep ecotype), this protein is 3-isopropylmalate dehydratase large subunit.